A 225-amino-acid chain; its full sequence is uncharacterized protein (225 aa).

The chain crosses the membrane as a helical span at residues 12–32 (AGFMMIFVFVIASFLLVLLFF).

It localises to the cell membrane. This is an uncharacterized protein from Bacillus subtilis (strain 168).